We begin with the raw amino-acid sequence, 632 residues long: Armadillo repeat-containing X-linked protein 2 (632 aa).

Residues 1-6 (MSRVRD) lie on the Mitochondrial intermembrane side of the membrane. The segment at 1–6 (MSRVRD) is mitochondrion outer membrane (MOM)-targeting sequence. The chain crosses the membrane as a helical; Signal-anchor span at residues 7 to 25 (AGCVAAGIVIGAGAWYCVY). Residues 26-40 (KYTRGRDQTKKRMAK) form a mitochondrion outer membrane (MOM)-targeting sequence region. At 26–632 (KYTRGRDQTK…VKVIKLVNKF (607 aa)) the chain is on the cytoplasmic side. Disordered regions lie at residues 68-124 (GFSP…AGVG), 160-304 (APKV…KVEV), and 335-369 (VPDS…RPVA). Low complexity-rich tracts occupy residues 86–120 (EASA…EADG) and 211–241 (VASP…SPGT). The segment covering 336–356 (PDSEEGESGWTDTESDSDSEP) has biased composition (acidic residues). ARM repeat units lie at residues 376-416 (PYEI…NNAN), 418-457 (SCNQ…NLSE), and 498-537 (ITND…NFAE).

This sequence belongs to the eutherian X-chromosome-specific Armcx family. As to expression, expressed at high levels ovary, heart, testis, prostate, brain, spleen and colon. Expressed at very low levels in liver and thymus. Not expressed in peripheral blood leukocytes. Not expressed in pancreas and ovarian carcinomas.

It is found in the mitochondrion. The protein resides in the mitochondrion outer membrane. In terms of biological role, may regulate the dynamics and distribution of mitochondria in neural cells. This Homo sapiens (Human) protein is Armadillo repeat-containing X-linked protein 2 (ARMCX2).